The following is a 220-amino-acid chain: Small ribosomal subunit protein uS3 (220 aa).

Positions 38–106 constitute a KH type-2 domain; sequence IRNFINKKLQ…QVHINIVEIK (69 aa).

It belongs to the universal ribosomal protein uS3 family. In terms of assembly, part of the 30S ribosomal subunit. Forms a tight complex with proteins S10 and S14.

Functionally, binds the lower part of the 30S subunit head. Binds mRNA in the 70S ribosome, positioning it for translation. This is Small ribosomal subunit protein uS3 from Lacticaseibacillus paracasei (strain ATCC 334 / BCRC 17002 / CCUG 31169 / CIP 107868 / KCTC 3260 / NRRL B-441) (Lactobacillus paracasei).